Reading from the N-terminus, the 332-residue chain is 2,3-diketo-L-gulonate reductase (332 aa).

Residue His-44 is the Proton donor of the active site. Residues 168-174, 224-225, and 304-306 each bind NAD(+); these read ITMVDMS, WK, and GHE.

The protein belongs to the LDH2/MDH2 oxidoreductase family. DlgD subfamily. As to quaternary structure, homodimer.

It localises to the cytoplasm. It catalyses the reaction 3-dehydro-L-gulonate + NAD(+) = 2,3-dioxo-L-gulonate + NADH + H(+). It carries out the reaction 3-dehydro-L-gulonate + NADP(+) = 2,3-dioxo-L-gulonate + NADPH + H(+). Its function is as follows. Catalyzes the reduction of 2,3-diketo-L-gulonate in the presence of NADH, to form 3-keto-L-gulonate. The chain is 2,3-diketo-L-gulonate reductase from Escherichia coli O139:H28 (strain E24377A / ETEC).